The primary structure comprises 302 residues: 1,2-dihydroxynaphthalene dioxygenase (302 aa).

2 VOC domains span residues Glu-9–Gly-124 and Gly-149–Arg-270. Residue His-152 participates in Fe cation binding. Residues His-152, Asp-199–His-200, His-215, and Tyr-256 contribute to the substrate site. Position 215 (His-215) interacts with Fe cation. Glu-266 serves as a coordination point for Fe cation.

The protein belongs to the extradiol ring-cleavage dioxygenase family. It depends on Fe(2+) as a cofactor.

The enzyme catalyses naphthalene-1,2-diol + O2 = 2-hydroxychromene-2-carboxylate + H(+). It participates in aromatic compound metabolism; naphthalene degradation. Inhibited by bathophenanthroline sulfonate, o-phenanthroline, 8-hydroxyquinoline, 2,2'-dipyridyl and p-chlormercuribenzoate. Also inhibited by Hg(2+), Cu(2+), Co(2+) and Fe(3+) ions. Functionally, involved in the naphthalene catabolic pathway. Catalyzes the meta-cleavage of 1,2-dihydroxynaphthalene (1,2-DHN) to yield 2-hydroxychromene-2-carboxylic acid. Can also cleave 3-methylcatechol and 4-methylcatechol. In Pseudomonas putida (Arthrobacter siderocapsulatus), this protein is 1,2-dihydroxynaphthalene dioxygenase (nahC).